A 488-amino-acid chain; its full sequence is Germacrene A hydroxylase (488 aa).

The Cytoplasmic portion of the chain corresponds to 1 to 6 (MEVSLT). The chain crosses the membrane as a helical; Signal-anchor for type II membrane protein span at residues 7–23 (TSIALATIVFFLYKLLT). Residues 24 to 488 (RPTSSKNRLP…KTELMLVPSF (465 aa)) lie on the Lumenal side of the membrane. 4 N-linked (GlcNAc...) asparagine glycosylation sites follow: asparagine 169, asparagine 260, asparagine 379, and asparagine 412. Cysteine 432 contributes to the heme binding site.

This sequence belongs to the cytochrome P450 family. Requires heme as cofactor. In terms of tissue distribution, expressed in leaf primordia.

It localises to the endoplasmic reticulum membrane. The catalysed reaction is (+)-(R)-germacrene A + 3 reduced [NADPH--hemoprotein reductase] + 3 O2 = germacra-1(10),4,11(13)-trien-12-oate + 3 oxidized [NADPH--hemoprotein reductase] + 4 H2O + 4 H(+). It participates in secondary metabolite biosynthesis; terpenoid biosynthesis. In terms of biological role, involved in the biosynthesis of germacrene-derived sesquiterpene lactones. Catalyzes three consecutive oxidations of germacrene A to produce germacrene A acid. Could also catalyze the three-step oxidation of non-natural substrate amorphadiene to artemisinic acid. The sequence is that of Germacrene A hydroxylase from Helianthus annuus (Common sunflower).